A 115-amino-acid chain; its full sequence is Tyrosine-protein phosphatase 24 (115 aa).

In terms of domain architecture, Tyrosine-protein phosphatase spans 1–115 (WMMIVEQKCR…ETGSDAPMVV (115 aa)). Position 83 (aspartate 83) interacts with substrate.

The protein belongs to the protein-tyrosine phosphatase family.

It catalyses the reaction O-phospho-L-tyrosyl-[protein] + H2O = L-tyrosyl-[protein] + phosphate. This is Tyrosine-protein phosphatase 24 (STY-24) from Styela plicata (Wrinkled sea squirt).